Reading from the N-terminus, the 268-residue chain is Undecaprenyl-diphosphatase (268 aa).

8 helical membrane passes run 11 to 33 (FLGL…LLLI), 46 to 66 (FEVL…SAKL), 84 to 104 (LGVL…HGFI), 107 to 127 (VLFE…FILL), 144 to 164 (YPLP…IPGV), 185 to 205 (AEFS…YDLF), 213 to 233 (FNDG…GVFV), and 246 to 266 (FALF…ALII).

Belongs to the UppP family.

The protein localises to the cell inner membrane. It catalyses the reaction di-trans,octa-cis-undecaprenyl diphosphate + H2O = di-trans,octa-cis-undecaprenyl phosphate + phosphate + H(+). In terms of biological role, catalyzes the dephosphorylation of undecaprenyl diphosphate (UPP). Confers resistance to bacitracin. In Brucella suis (strain ATCC 23445 / NCTC 10510), this protein is Undecaprenyl-diphosphatase.